We begin with the raw amino-acid sequence, 102 residues long: Large ribosomal subunit protein uL24 (102 aa).

The tract at residues 1-22 is disordered; the sequence is MHVKKGDTVQVMSGKDKGKQGV.

Belongs to the universal ribosomal protein uL24 family. As to quaternary structure, part of the 50S ribosomal subunit.

One of two assembly initiator proteins, it binds directly to the 5'-end of the 23S rRNA, where it nucleates assembly of the 50S subunit. Functionally, one of the proteins that surrounds the polypeptide exit tunnel on the outside of the subunit. The protein is Large ribosomal subunit protein uL24 of Exiguobacterium sp. (strain ATCC BAA-1283 / AT1b).